Reading from the N-terminus, the 610-residue chain is DNA mismatch repair protein MutL (610 aa).

It belongs to the DNA mismatch repair MutL/HexB family.

Its function is as follows. This protein is involved in the repair of mismatches in DNA. It is required for dam-dependent methyl-directed DNA mismatch repair. May act as a 'molecular matchmaker', a protein that promotes the formation of a stable complex between two or more DNA-binding proteins in an ATP-dependent manner without itself being part of a final effector complex. The protein is DNA mismatch repair protein MutL of Rickettsia rickettsii (strain Sheila Smith).